Consider the following 199-residue polypeptide: ATP-dependent Clp protease proteolytic subunit 2 (199 aa).

Ser-98 functions as the Nucleophile in the catalytic mechanism. The active site involves His-123.

Belongs to the peptidase S14 family. In terms of assembly, fourteen ClpP subunits assemble into 2 heptameric rings which stack back to back to give a disk-like structure with a central cavity, resembling the structure of eukaryotic proteasomes.

It localises to the cytoplasm. The enzyme catalyses Hydrolysis of proteins to small peptides in the presence of ATP and magnesium. alpha-casein is the usual test substrate. In the absence of ATP, only oligopeptides shorter than five residues are hydrolyzed (such as succinyl-Leu-Tyr-|-NHMec, and Leu-Tyr-Leu-|-Tyr-Trp, in which cleavage of the -Tyr-|-Leu- and -Tyr-|-Trp bonds also occurs).. Cleaves peptides in various proteins in a process that requires ATP hydrolysis. Has a chymotrypsin-like activity. Plays a major role in the degradation of misfolded proteins. The chain is ATP-dependent Clp protease proteolytic subunit 2 from Treponema pallidum (strain Nichols).